Here is a 671-residue protein sequence, read N- to C-terminus: DNA ligase (671 aa).

Residues 32-36 (DAEYD), 81-82 (SL), and Glu113 contribute to the NAD(+) site. Lys115 acts as the N6-AMP-lysine intermediate in catalysis. 4 residues coordinate NAD(+): Arg136, Glu173, Lys290, and Lys314. Cys408, Cys411, Cys426, and Cys432 together coordinate Zn(2+). Positions 593–671 (EIDSPFAGKT…EAEMIRLLGA (79 aa)) constitute a BRCT domain.

Belongs to the NAD-dependent DNA ligase family. LigA subfamily. It depends on Mg(2+) as a cofactor. Mn(2+) is required as a cofactor.

It catalyses the reaction NAD(+) + (deoxyribonucleotide)n-3'-hydroxyl + 5'-phospho-(deoxyribonucleotide)m = (deoxyribonucleotide)n+m + AMP + beta-nicotinamide D-nucleotide.. In terms of biological role, DNA ligase that catalyzes the formation of phosphodiester linkages between 5'-phosphoryl and 3'-hydroxyl groups in double-stranded DNA using NAD as a coenzyme and as the energy source for the reaction. It is essential for DNA replication and repair of damaged DNA. The protein is DNA ligase of Salmonella typhi.